Reading from the N-terminus, the 238-residue chain is Zinc-finger homeodomain protein 11 (238 aa).

A ZF-HD dimerization-type; degenerate zinc finger spans residues 12 to 59; that stretch reads YRECMRNHAAKLGTYANDGCCEYTPDDGHPAGLLCAACGCHRNFHRKD. The homeobox DNA-binding region spans 119–188; sequence RRRTRTKFTE…NHKAGGGGGG (70 aa). The segment covering 183 to 200 has biased composition (gly residues); that stretch reads GGGGGGGGSGGPGAGGGA. Residues 183-238 form a disordered region; sequence GGGGGGGGSGGPGAGGGAQTSSSTTRGGGDVGVGLSPAMGGDGEDDEEVRGSEMCM.

As to quaternary structure, homo- and heterodimer with other ZFHD proteins.

It localises to the nucleus. Functionally, putative transcription factor. In Oryza sativa subsp. indica (Rice), this protein is Zinc-finger homeodomain protein 11 (ZHD11).